Here is a 562-residue protein sequence, read N- to C-terminus: NAD-dependent malic enzyme (562 aa).

The active-site Proton donor is Y101. R154 lines the NAD(+) pocket. The active-site Proton acceptor is K172. Residues E243, D244, and D267 each contribute to the a divalent metal cation site. 2 residues coordinate NAD(+): D267 and N415.

The protein belongs to the malic enzymes family. As to quaternary structure, homotetramer. Mg(2+) serves as cofactor. Requires Mn(2+) as cofactor.

It catalyses the reaction (S)-malate + NAD(+) = pyruvate + CO2 + NADH. It carries out the reaction oxaloacetate + H(+) = pyruvate + CO2. In Shewanella loihica (strain ATCC BAA-1088 / PV-4), this protein is NAD-dependent malic enzyme.